A 245-amino-acid polypeptide reads, in one-letter code: tRNA (guanine-N(1)-)-methyltransferase (245 aa).

S-adenosyl-L-methionine contacts are provided by residues Gly-114 and 134-139 (IGDYIL).

This sequence belongs to the RNA methyltransferase TrmD family. As to quaternary structure, homodimer.

The protein resides in the cytoplasm. The enzyme catalyses guanosine(37) in tRNA + S-adenosyl-L-methionine = N(1)-methylguanosine(37) in tRNA + S-adenosyl-L-homocysteine + H(+). Functionally, specifically methylates guanosine-37 in various tRNAs. In Listeria monocytogenes serotype 4b (strain CLIP80459), this protein is tRNA (guanine-N(1)-)-methyltransferase.